The sequence spans 456 residues: Acetylcholine receptor subunit alpha (456 aa).

Positions Met-1–Cys-20 are cleaved as a signal peptide. Residues Ser-21–Leu-230 lie on the Extracellular side of the membrane. 2 cysteine pairs are disulfide-bonded: Cys-148–Cys-162 and Cys-212–Cys-213. Asn-161 carries an N-linked (GlcNAc...) asparagine glycan. 3 consecutive transmembrane segments (helical) span residues Pro-231–Leu-255, Met-263–Val-281, and Tyr-297–Ile-316. At Asn-317–His-428 the chain is on the cytoplasmic side. A helical transmembrane segment spans residues Ile-429–Ala-447.

It belongs to the ligand-gated ion channel (TC 1.A.9) family. Acetylcholine receptor (TC 1.A.9.1) subfamily. Alpha-1/CHRNA1 sub-subfamily. In terms of assembly, one of the alpha chains that assemble within the acetylcholine receptor, a pentamer of two alpha chains, a beta, a delta, and a gamma or epsilon chains.

The protein resides in the postsynaptic cell membrane. It is found in the cell membrane. It carries out the reaction K(+)(in) = K(+)(out). It catalyses the reaction Na(+)(in) = Na(+)(out). Its function is as follows. Upon acetylcholine binding, the AChR responds by an extensive change in conformation that affects all subunits and leads to opening of an ion-conducting channel across the plasma membrane. In Danio rerio (Zebrafish), this protein is Acetylcholine receptor subunit alpha (chrna1).